The chain runs to 192 residues: Pyruvate kinase (192 aa).

Arg41 contributes to the substrate binding site. The K(+) site is built by Asn43, Ser45, Asp75, and Thr76. 43–46 is an ATP binding site; the sequence is NFSH.

The protein belongs to the pyruvate kinase family. Requires Mg(2+) as cofactor. K(+) is required as a cofactor.

It carries out the reaction pyruvate + ATP = phosphoenolpyruvate + ADP + H(+). The protein operates within carbohydrate degradation; glycolysis; pyruvate from D-glyceraldehyde 3-phosphate: step 5/5. This Spiroplasma citri protein is Pyruvate kinase (pyk).